The primary structure comprises 115 residues: Large ribosomal subunit protein eL30 (115 aa).

Phosphoserine is present on residues Ser10 and Ser16. Lys26 is subject to N6-acetyllysine; alternate. A Glycyl lysine isopeptide (Lys-Gly) (interchain with G-Cter in SUMO2); alternate cross-link involves residue Lys26.

The protein belongs to the eukaryotic ribosomal protein eL30 family. In terms of assembly, component of the large ribosomal subunit.

The protein localises to the cytoplasm. In terms of biological role, component of the large ribosomal subunit. The ribosome is a large ribonucleoprotein complex responsible for the synthesis of proteins in the cell. The chain is Large ribosomal subunit protein eL30 (RPL30) from Oryctolagus cuniculus (Rabbit).